Reading from the N-terminus, the 388-residue chain is PIQLNPAPDGSAVNGTSSAETNLEALQKKLEELELDEQQRKRLEAFLTQKQKVGELKDDDFEKISELGAGNGGVVFKVSHKPSGLIMARKLIHLEIKPAIRNQIIRELQVLHECNSPYIVGFYGAFYSDGEISICMEHMDGGSLDQVLKKAGRIPEQILGKVSIAVIKGLTYLREKHKIMHRDVKPSNILVNSRGEIKLCDFGVSGQLIDSMANSFVGTRSYMSPERLQGTHYSVQSDIWSMGLSLVEMAIGRYPIPPPDSKELELMFGCPVEGDSPVTETSPRQRAPGRPMSSYGSDSRPPMAIFELLDYIVNEPPPKLPNGVFGSEFQDFVNKCLIKNPAERADLKQLMIHAFIKRSEAEEVDFAGWLCSTIGLNQPSTPTHAAGV.

A disordered region spans residues 1–20 (PIQLNPAPDGSAVNGTSSAE). One can recognise a Protein kinase domain in the interval 61–356 (FEKISELGAG…LKQLMIHAFI (296 aa)). ATP contacts are provided by residues 67 to 75 (LGAGNGGVV) and K90. D183 (proton acceptor) is an active-site residue. A phosphoserine; by RAF mark is found at S211 and S215. Residues 275–299 (DSPVTETSPRQRAPGRPMSSYGSDS) form a disordered region.

Belongs to the protein kinase superfamily. STE Ser/Thr protein kinase family. MAP kinase kinase subfamily. In terms of processing, MAPKK is itself dependent on Ser/Thr phosphorylation for activity catalyzed by MAP kinase kinase kinases (RAF or MEKK1).

It localises to the cytoplasm. The protein localises to the cytoskeleton. Its subcellular location is the microtubule organizing center. It is found in the centrosome. The protein resides in the spindle pole body. It localises to the nucleus. It carries out the reaction L-seryl-[protein] + ATP = O-phospho-L-seryl-[protein] + ADP + H(+). The catalysed reaction is L-threonyl-[protein] + ATP = O-phospho-L-threonyl-[protein] + ADP + H(+). It catalyses the reaction L-tyrosyl-[protein] + ATP = O-phospho-L-tyrosyl-[protein] + ADP + H(+). Dual specificity protein kinase which acts as an essential component of the MAP kinase signal transduction pathway. Binding of extracellular ligands such as growth factors, cytokines and hormones to their cell-surface receptors activates RAS and this initiates RAF1 activation. RAF1 then further activates the dual-specificity protein kinases MAP2K1/MEK1 and MAP2K2/MEK2. Both MAP2K1/MEK1 and MAP2K2/MEK2 function specifically in the MAPK/ERK cascade, and catalyze the concomitant phosphorylation of a threonine and a tyrosine residue in a Thr-Glu-Tyr sequence located in the extracellular signal-regulated kinases MAPK3/ERK1 and MAPK1/ERK2, leading to their activation and further transduction of the signal within the MAPK/ERK cascade. Depending on the cellular context, this pathway mediates diverse biological functions such as cell growth, adhesion, survival and differentiation predominantly through the regulation of transcription, metabolism and cytoskeletal rearrangements. This is Dual specificity mitogen-activated protein kinase kinase 1 (MAP2K1) from Serinus canaria (Island canary).